The sequence spans 541 residues: MAMNVSTTATTTASFASTSSMNNTAKILLITLFISIVSTVIKLQKRASYKKASKNFPLPPGPTPWPLIGNIPEMIRYRPTFRWIHQLMKDMNTDICLIRFGKTNVVPISCPVIAREILKKHDAVFSNRPKILCAKTMSGGYLTTIVVPYNDQWKKMRKVLTSEIISPARHKWLHDKRAEEADQLVFYINNQYKSNKNVNVRIAARHYGGNVIRKMMFSKRYFGKGMPDGGPGPEEIMHVDAIFTALKYLYGFCISDYLPFLEGLDLDGQEKIVLNANKTIRDLQNPLIEERIQQWRSGERKEMEDLLDVFITLQDSDGKPLLNPDEIKNQIAEIMIATIDNPANAVEWAMGELINQPELLAKATEELDRVVGKDRLVQESDIPNLNYVKACAREAFRLHPVAYFNVPHVAMEDAVIGDYFIPKGSWAILSRYGLGRNPKTWPDPLKYDPERHLNEGEVVLTEHDLRFVTFSTGRRGCVAALLGTTMITMMLARMLQCFTWTPPPNVTRIDLSENIDELTPATPITGFAKPRLAPHLYPTSP.

The Cytoplasmic portion of the chain corresponds to 1-18; it reads MAMNVSTTATTTASFAST. The chain crosses the membrane as a helical span at residues 19-41; sequence SSMNNTAKILLITLFISIVSTVI. Residues 42 to 541 lie on the Lumenal side of the membrane; sequence KLQKRASYKK…LAPHLYPTSP (500 aa). Asn-277 is a glycosylation site (N-linked (GlcNAc...) asparagine). Position 477 (Cys-477) interacts with heme. Asn-505 is a glycosylation site (N-linked (GlcNAc...) asparagine).

This sequence belongs to the cytochrome P450 family. Requires heme as cofactor. In terms of tissue distribution, expressed in the epidermis, the next two cortex cell layers, the endodermis and the pericycle of leaf petioles. Strong expression around the laticifers among the phloem cells and in parenchymatic cells between the protoxylem and the metaxylem cells. In the leaves, preferentially expressed in the mesophyll cells adjacent to the epidermis.

The protein localises to the microsome membrane. It carries out the reaction L-valine + 2 reduced [NADPH--hemoprotein reductase] + 2 O2 = (E)-2-methylpropanal oxime + 2 oxidized [NADPH--hemoprotein reductase] + CO2 + 3 H2O + 2 H(+). The enzyme catalyses L-valine + reduced [NADPH--hemoprotein reductase] + O2 = N-hydroxy-L-valine + oxidized [NADPH--hemoprotein reductase] + H2O + 2 H(+). It catalyses the reaction N-hydroxy-L-valine + reduced [NADPH--hemoprotein reductase] + O2 = N,N-dihydroxy-L-valine + oxidized [NADPH--hemoprotein reductase] + H2O + H(+). The catalysed reaction is L-isoleucine + 2 reduced [NADPH--hemoprotein reductase] + 2 O2 = (1E,2S)-2-methylbutanal oxime + 2 oxidized [NADPH--hemoprotein reductase] + CO2 + 3 H2O + 2 H(+). It carries out the reaction L-isoleucine + reduced [NADPH--hemoprotein reductase] + O2 = N-hydroxy-L-isoleucine + oxidized [NADPH--hemoprotein reductase] + H2O + 2 H(+). The enzyme catalyses N-hydroxy-L-isoleucine + reduced [NADPH--hemoprotein reductase] + O2 = N,N-dihydroxy-L-isoleucine + oxidized [NADPH--hemoprotein reductase] + H2O + H(+). In terms of biological role, involved in the biosynthesis of the cyanogenic glucosides linamarin and lotaustralin. Can use L-valine or L-isoleucine as substrate. Catalyzes multi-step reactions starting with two successive N-hydroxylations using L-valine and L-isoleucine as substrates leading to the formation of N,N-dihydroxy-L-valine and N,N-dihydroxy-L-isoleucine, respectively; following spontaneous reactions lead to the production of (E)-2-methylpropanal oxime and (1E,2S)-2-methylbutanal oxime, respectively. In Manihot esculenta (Cassava), this protein is Valine N-monooxygenase 2.